Consider the following 371-residue polypeptide: Cytochrome b (371 aa).

4 consecutive transmembrane segments (helical) span residues phenylalanine 25 to valine 45, tryptophan 69 to isoleucine 90, tryptophan 105 to leucine 125, and phenylalanine 170 to isoleucine 190. Heme b is bound by residues histidine 75 and histidine 89. Heme b-binding residues include histidine 174 and histidine 188. Histidine 193 lines the a ubiquinone pocket. 4 consecutive transmembrane segments (helical) span residues tyrosine 218–phenylalanine 238, leucine 280–histidine 300, leucine 312–threonine 332, and phenylalanine 339–proline 358.

The protein belongs to the cytochrome b family. As to quaternary structure, the cytochrome bc1 complex contains 3 respiratory subunits (MT-CYB, CYC1 and UQCRFS1), 2 core proteins (UQCRC1 and UQCRC2) and probably 6 low-molecular weight proteins. The cofactor is heme b.

It localises to the mitochondrion inner membrane. Component of the ubiquinol-cytochrome c reductase complex (complex III or cytochrome b-c1 complex) that is part of the mitochondrial respiratory chain. The b-c1 complex mediates electron transfer from ubiquinol to cytochrome c. Contributes to the generation of a proton gradient across the mitochondrial membrane that is then used for ATP synthesis. The sequence is that of Cytochrome b (MT-CYB) from Python sebae (African rock python).